A 354-amino-acid polypeptide reads, in one-letter code: 5,10-methenyltetrahydromethanopterin hydrogenase (354 aa).

Belongs to the HMD family.

The catalysed reaction is 5,10-methenyl-5,6,7,8-tetrahydromethanopterin + H2 = 5,10-methylenetetrahydromethanopterin + H(+). Its pathway is one-carbon metabolism; methanogenesis from CO(2); 5,10-methylene-5,6,7,8-tetrahydromethanopterin from 5,10-methenyl-5,6,7,8-tetrahydromethanopterin (hydrogen route): step 1/1. In terms of biological role, catalyzes the reversible reduction of methenyl-H(4)MPT(+) to methylene-H(4)MPT. This Methanococcus maripaludis (strain C7 / ATCC BAA-1331) protein is 5,10-methenyltetrahydromethanopterin hydrogenase.